Reading from the N-terminus, the 708-residue chain is ATP-dependent DNA helicase Hel308 (708 aa).

The short motif at 1-29 (MSIDDLKLPSNVIDIIKNRGIKKLNPPQT) is the Q motif element. ATP-binding positions include Gln-28 and 46–53 (SPTGSGKT). The Helicase ATP-binding domain occupies 33–196 (KKGLLDGNRL…WLGAEPVATN (164 aa)). Residues 145–148 (DELH) carry the DEAH box motif. The Helicase C-terminal domain maps to 229–435 (HGDDAIIAYT…ERAFYTFLLG (207 aa)).

This sequence belongs to the helicase family. Hel308 subfamily. As to quaternary structure, monomer.

The enzyme catalyses Couples ATP hydrolysis with the unwinding of duplex DNA by translocating in the 3'-5' direction.. It carries out the reaction ATP + H2O = ADP + phosphate + H(+). In terms of biological role, DNA-dependent ATPase and 3'-5' DNA helicase that may be involved in repair of stalled replication forks. In Saccharolobus solfataricus (strain ATCC 35092 / DSM 1617 / JCM 11322 / P2) (Sulfolobus solfataricus), this protein is ATP-dependent DNA helicase Hel308.